Here is a 102-residue protein sequence, read N- to C-terminus: Vacuolar ATPase assembly integral membrane protein VMA21 homolog (102 aa).

Residues 1–33 (MTTSSSSEPSTMATLFPNFRDQEVQSAVKNLLT) lie on the Cytoplasmic side of the membrane. Residues 34–54 (YSLVILIVPLASMFLLKQFFF) traverse the membrane as a helical segment. Topologically, residues 55–67 (EGLLGVSANDALT) are lumenal. Residues 68-88 (YSAIIAVVLVHVVLGIWLFAA) traverse the membrane as a helical segment. Residues 89-102 (TKQEDRKKRENKQD) lie on the Cytoplasmic side of the membrane.

It belongs to the VMA21 family.

It localises to the endoplasmic reticulum membrane. It is found in the endoplasmic reticulum-Golgi intermediate compartment membrane. The protein localises to the cytoplasmic vesicle. Its subcellular location is the COPII-coated vesicle membrane. Functionally, required for the assembly of the V0 complex of the vacuolar ATPase (V-ATPase) in the endoplasmic reticulum. This is Vacuolar ATPase assembly integral membrane protein VMA21 homolog from Caenorhabditis elegans.